The sequence spans 473 residues: Ribulose bisphosphate carboxylase large chain (473 aa).

Residues 1–2 (MS) constitute a propeptide that is removed on maturation. Position 3 is an N-acetylproline (Pro-3). An N6,N6,N6-trimethyllysine modification is found at Lys-14. Residues Asn-123 and Thr-173 each contribute to the substrate site. Catalysis depends on Lys-175, which acts as the Proton acceptor. A substrate-binding site is contributed by Lys-177. 3 residues coordinate Mg(2+): Lys-201, Asp-203, and Glu-204. Lys-201 bears the N6-carboxylysine mark. The Proton acceptor role is filled by His-294. 3 residues coordinate substrate: Arg-295, His-327, and Ser-379.

The protein belongs to the RuBisCO large chain family. Type I subfamily. In terms of assembly, heterohexadecamer of 8 large chains and 8 small chains; disulfide-linked. The disulfide link is formed within the large subunit homodimers. It depends on Mg(2+) as a cofactor. Post-translationally, the disulfide bond which can form in the large chain dimeric partners within the hexadecamer appears to be associated with oxidative stress and protein turnover.

The protein localises to the plastid. It is found in the chloroplast. It catalyses the reaction 2 (2R)-3-phosphoglycerate + 2 H(+) = D-ribulose 1,5-bisphosphate + CO2 + H2O. The enzyme catalyses D-ribulose 1,5-bisphosphate + O2 = 2-phosphoglycolate + (2R)-3-phosphoglycerate + 2 H(+). In terms of biological role, ruBisCO catalyzes two reactions: the carboxylation of D-ribulose 1,5-bisphosphate, the primary event in carbon dioxide fixation, as well as the oxidative fragmentation of the pentose substrate in the photorespiration process. Both reactions occur simultaneously and in competition at the same active site. This is Ribulose bisphosphate carboxylase large chain from Ajuga chamaepitys (Yellow bugle).